Reading from the N-terminus, the 644-residue chain is uncharacterized protein (644 aa).

The disordered stretch occupies residues 1-35 (MKANGLDNDPARTGMERTDIDSEHPEAQPLLNNNH). Over 1–90 (MKANGLDNDP…ILNILILINT (90 aa)) the chain is Cytoplasmic. Basic and acidic residues predominate over residues 14–26 (GMERTDIDSEHPE). A phosphoserine mark is found at Ser22, Ser56, and Ser63. Residues 91–111 (IWLVTTLISDFFFNINILFGF) form a helical membrane-spanning segment. At 112–122 (SNRYASFNDLT) the chain is on the vacuolar side. The helical transmembrane segment at 123-143 (LIFISIIANSFNLWFNKLGLY) threads the bilayer. The Cytoplasmic portion of the chain corresponds to 144–147 (SALD). The chain crosses the membrane as a helical span at residues 148–168 (YSLNVTLCVLTLFNLALTYLI). Residues 169–174 (KYTRQR) lie on the Vacuolar side of the membrane. Residues 175-195 (IGFVGTFTYLWTSFSFFIGAI) traverse the membrane as a helical segment. Over 196–271 (LDWYLLFYNN…EWVSIGFRNT (76 aa)) the chain is Cytoplasmic. A disordered region spans residues 225–251 (NENHTNSTENRDRSQYGSGSPTPTHRS). Polar residues predominate over residues 239–251 (QYGSGSPTPTHRS). Residue Ser244 is modified to Phosphoserine. Residues 272 to 292 (IKFLILIFFALFTLNTLLTTL) traverse the membrane as a helical segment. At 293 to 644 (DTYRLTHKLP…IGELGKLTED (352 aa)) the chain is on the vacuolar side. The AB hydrolase-1 domain maps to 348-619 (PIILFEHGGY…IVEGGHEIYK (272 aa)). The segment at 469-492 (GRGDGDDGDDGNGNDGDGRNHDKT) is disordered.

It is found in the vacuole membrane. This is an uncharacterized protein from Saccharomyces cerevisiae (strain ATCC 204508 / S288c) (Baker's yeast).